The following is a 142-amino-acid chain: gSG7 salivary protein (142 aa).

The first 26 residues, 1-26 (MAARMTIMLPLAVALICLLQTEPGMA), serve as a signal peptide directing secretion. 2 disulfide bridges follow: cysteine 84/cysteine 139 and cysteine 107/cysteine 117.

Its subcellular location is the secreted. In terms of biological role, salivary protein that moderately inhibits the alternative pathway for complement system activation in the host. In Anopheles darlingi (Mosquito), this protein is gSG7 salivary protein.